Here is a 342-residue protein sequence, read N- to C-terminus: Ribosomal RNA small subunit methyltransferase C (342 aa).

It belongs to the methyltransferase superfamily. RsmC family. As to quaternary structure, monomer.

It is found in the cytoplasm. It catalyses the reaction guanosine(1207) in 16S rRNA + S-adenosyl-L-methionine = N(2)-methylguanosine(1207) in 16S rRNA + S-adenosyl-L-homocysteine + H(+). Its function is as follows. Specifically methylates the guanine in position 1207 of 16S rRNA in the 30S particle. This is Ribosomal RNA small subunit methyltransferase C from Shewanella oneidensis (strain ATCC 700550 / JCM 31522 / CIP 106686 / LMG 19005 / NCIMB 14063 / MR-1).